A 119-amino-acid polypeptide reads, in one-letter code: NADH-quinone oxidoreductase subunit A (119 aa).

Helical transmembrane passes span 9 to 29, 63 to 83, and 88 to 108; these read VLLFILVGMGVGVVPLVLGYV, LVAILFILFDLEIAFLLPWAV, and VGGAGFAAVLIFLTVLVVGFV.

This sequence belongs to the complex I subunit 3 family. As to quaternary structure, NDH-1 is composed of 14 different subunits. Subunits NuoA, H, J, K, L, M, N constitute the membrane sector of the complex.

It localises to the cell inner membrane. It catalyses the reaction a quinone + NADH + 5 H(+)(in) = a quinol + NAD(+) + 4 H(+)(out). Functionally, NDH-1 shuttles electrons from NADH, via FMN and iron-sulfur (Fe-S) centers, to quinones in the respiratory chain. The immediate electron acceptor for the enzyme in this species is believed to be ubiquinone. Couples the redox reaction to proton translocation (for every two electrons transferred, four hydrogen ions are translocated across the cytoplasmic membrane), and thus conserves the redox energy in a proton gradient. This is NADH-quinone oxidoreductase subunit A from Delftia acidovorans (strain DSM 14801 / SPH-1).